The chain runs to 114 residues: Small ribosomal subunit protein bS6 (114 aa).

The protein belongs to the bacterial ribosomal protein bS6 family.

Functionally, binds together with bS18 to 16S ribosomal RNA. This chain is Small ribosomal subunit protein bS6, found in Thermosynechococcus vestitus (strain NIES-2133 / IAM M-273 / BP-1).